The primary structure comprises 78 residues: Large ribosomal subunit protein bL28 (78 aa).

Belongs to the bacterial ribosomal protein bL28 family.

The sequence is that of Large ribosomal subunit protein bL28 from Shigella boydii serotype 4 (strain Sb227).